Here is a 576-residue protein sequence, read N- to C-terminus: Flagellin B (576 aa).

The protein belongs to the bacterial flagellin family. In terms of assembly, heteromer of FlaA and FlaB. Interacts with FliW. Interacts with FliS.

The protein localises to the secreted. Its subcellular location is the bacterial flagellum. Functionally, flagellin is the subunit protein which polymerizes to form the filaments of bacterial flagella. This Campylobacter jejuni subsp. jejuni serotype O:6 (strain 81116 / NCTC 11828) protein is Flagellin B (flaB).